The primary structure comprises 101 residues: Large ribosomal subunit protein eL30 (101 aa).

This sequence belongs to the eukaryotic ribosomal protein eL30 family.

The polypeptide is Large ribosomal subunit protein eL30 (Pyrobaculum calidifontis (strain DSM 21063 / JCM 11548 / VA1)).